A 229-amino-acid chain; its full sequence is Cytochrome c oxidase subunit 2 (229 aa).

Over 1-26 the chain is Mitochondrial intermembrane; the sequence is MSTWANLGLQDSASPLMEQLIFFHDH. The helical transmembrane segment at 27–48 threads the bilayer; sequence ALLILVMITILVGYLMFMLFFN. Topologically, residues 49 to 62 are mitochondrial matrix; that stretch reads SYINRFLLHGQLIE. A helical membrane pass occupies residues 63 to 82; the sequence is MIWTILPAIILLFIAMPSLR. Over 83–229 the chain is Mitochondrial intermembrane; it reads LLYLLDEINE…IKWIASKVNS (147 aa). Histidine 161, cysteine 196, glutamate 198, cysteine 200, histidine 204, and methionine 207 together coordinate Cu cation. Glutamate 198 contacts Mg(2+).

Belongs to the cytochrome c oxidase subunit 2 family. As to quaternary structure, component of the cytochrome c oxidase (complex IV, CIV), a multisubunit enzyme composed of a catalytic core of 3 subunits and several supernumerary subunits. The complex exists as a monomer or a dimer and forms supercomplexes (SCs) in the inner mitochondrial membrane with ubiquinol-cytochrome c oxidoreductase (cytochrome b-c1 complex, complex III, CIII). Cu cation is required as a cofactor.

The protein resides in the mitochondrion inner membrane. It catalyses the reaction 4 Fe(II)-[cytochrome c] + O2 + 8 H(+)(in) = 4 Fe(III)-[cytochrome c] + 2 H2O + 4 H(+)(out). Its function is as follows. Component of the cytochrome c oxidase, the last enzyme in the mitochondrial electron transport chain which drives oxidative phosphorylation. The respiratory chain contains 3 multisubunit complexes succinate dehydrogenase (complex II, CII), ubiquinol-cytochrome c oxidoreductase (cytochrome b-c1 complex, complex III, CIII) and cytochrome c oxidase (complex IV, CIV), that cooperate to transfer electrons derived from NADH and succinate to molecular oxygen, creating an electrochemical gradient over the inner membrane that drives transmembrane transport and the ATP synthase. Cytochrome c oxidase is the component of the respiratory chain that catalyzes the reduction of oxygen to water. Electrons originating from reduced cytochrome c in the intermembrane space (IMS) are transferred via the dinuclear copper A center (CU(A)) of subunit 2 and heme A of subunit 1 to the active site in subunit 1, a binuclear center (BNC) formed by heme A3 and copper B (CU(B)). The BNC reduces molecular oxygen to 2 water molecules using 4 electrons from cytochrome c in the IMS and 4 protons from the mitochondrial matrix. The chain is Cytochrome c oxidase subunit 2 (mt:CoII) from Drosophila bifasciata (Fruit fly).